We begin with the raw amino-acid sequence, 232 residues long: MHDRRAMTEKTILWNSSPGLVPYPDAIAGMEHQVAGIRDGSAPERVWLLEHPPTFTAGTSARDEDLFNPHHFPTYAAGRGGQWTYHGPGQRVAYVMLDLTAPHGVVPARDLRAYVHTLEEWLIRTLRRFDVTGERRADRIGVWVVDARTGAENKIAALGVRVSRWTCWHGVALNVAPNLDDFGGIVPCGIREHGVTSLHALGHKVSLGDVDEALRATWQDLFGSVPTPIGTA.

Residues 40 to 226 enclose the BPL/LPL catalytic domain; it reads GSAPERVWLL…TWQDLFGSVP (187 aa). Substrate contacts are provided by residues 79 to 86, 157 to 159, and 170 to 172; these read RGGQWTYH, ALG, and GVA. The Acyl-thioester intermediate role is filled by Cys188.

The protein belongs to the LipB family.

The protein localises to the cytoplasm. It catalyses the reaction octanoyl-[ACP] + L-lysyl-[protein] = N(6)-octanoyl-L-lysyl-[protein] + holo-[ACP] + H(+). Its pathway is protein modification; protein lipoylation via endogenous pathway; protein N(6)-(lipoyl)lysine from octanoyl-[acyl-carrier-protein]: step 1/2. Catalyzes the transfer of endogenously produced octanoic acid from octanoyl-acyl-carrier-protein onto the lipoyl domains of lipoate-dependent enzymes. Lipoyl-ACP can also act as a substrate although octanoyl-ACP is likely to be the physiological substrate. The sequence is that of Octanoyltransferase from Gluconacetobacter diazotrophicus (strain ATCC 49037 / DSM 5601 / CCUG 37298 / CIP 103539 / LMG 7603 / PAl5).